We begin with the raw amino-acid sequence, 758 residues long: Vitamin K-dependent gamma-carboxylase (758 aa).

Positions methionine 1–lysine 21 are disordered. Alanine 2 carries the N-acetylalanine modification. Residues alanine 2–aspartate 60 are Cytoplasmic-facing. The helical transmembrane segment at proline 61–glutamine 81 threads the bilayer. Over glutamate 82 to aspartate 113 the chain is Lumenal. Cysteine 99 and cysteine 450 are disulfide-bonded. The chain crosses the membrane as a helical span at residues tryptophan 114–cysteine 134. The Cytoplasmic segment spans residues tyrosine 135–arginine 136. A helical membrane pass occupies residues isoleucine 137–tryptophan 157. Residues asparagine 158–glutamine 292 lie on the Lumenal side of the membrane. A helical membrane pass occupies residues leucine 293–proline 313. Residues glutamate 314–glutamine 361 lie on the Cytoplasmic side of the membrane. A helical transmembrane segment spans residues leucine 362–phenylalanine 382. Residues leucine 383–phenylalanine 758 lie on the Lumenal side of the membrane. The segment at glycine 732–phenylalanine 758 is disordered. Residues serine 735–proline 747 show a composition bias toward polar residues.

The protein belongs to the vitamin K-dependent gamma-carboxylase family. In terms of assembly, monomer. May interact with CALU.

The protein localises to the endoplasmic reticulum membrane. It catalyses the reaction 4-carboxy-L-glutamyl-[protein] + 2,3-epoxyphylloquinone + H2O + H(+) = phylloquinol + L-glutamyl-[protein] + CO2 + O2. Its function is as follows. Mediates the vitamin K-dependent carboxylation of glutamate residues to calcium-binding gamma-carboxyglutamate (Gla) residues with the concomitant conversion of the reduced hydroquinone form of vitamin K to vitamin K epoxide. Catalyzes gamma-carboxylation of various proteins, such as blood coagulation factors (F2, F7, F9 and F10), osteocalcin (BGLAP) or matrix Gla protein (MGP). This is Vitamin K-dependent gamma-carboxylase (GGCX) from Pongo abelii (Sumatran orangutan).